A 591-amino-acid polypeptide reads, in one-letter code: Aspartate--tRNA(Asp/Asn) ligase (591 aa).

Glu176 contributes to the L-aspartate binding site. An aspartate region spans residues 200-203 (QLFK). L-aspartate is bound at residue Arg222. ATP is bound by residues 222–224 (RDE) and Gln231. His450 serves as a coordination point for L-aspartate. Residue Glu484 participates in ATP binding. Arg491 serves as a coordination point for L-aspartate. 536–539 (GLDR) is an ATP binding site.

The protein belongs to the class-II aminoacyl-tRNA synthetase family. Type 1 subfamily. In terms of assembly, homodimer.

It localises to the cytoplasm. It carries out the reaction tRNA(Asx) + L-aspartate + ATP = L-aspartyl-tRNA(Asx) + AMP + diphosphate. Its function is as follows. Aspartyl-tRNA synthetase with relaxed tRNA specificity since it is able to aspartylate not only its cognate tRNA(Asp) but also tRNA(Asn). Reaction proceeds in two steps: L-aspartate is first activated by ATP to form Asp-AMP and then transferred to the acceptor end of tRNA(Asp/Asn). This Bacillus cereus (strain B4264) protein is Aspartate--tRNA(Asp/Asn) ligase.